The following is a 368-amino-acid chain: tRNA-specific 2-thiouridylase MnmA (368 aa).

ATP contacts are provided by residues 11–18 (GMSGGVDS) and methionine 37. Positions 97-99 (NPD) are interaction with target base in tRNA. Cysteine 102 acts as the Nucleophile in catalysis. Cysteine 102 and cysteine 199 are joined by a disulfide. Glycine 127 is an ATP binding site. Positions 149–151 (KDQ) are interaction with tRNA. The active-site Cysteine persulfide intermediate is cysteine 199. Residues 311–312 (RY) form an interaction with tRNA region.

It belongs to the MnmA/TRMU family. As to quaternary structure, interacts with TusE.

It localises to the cytoplasm. The catalysed reaction is S-sulfanyl-L-cysteinyl-[protein] + uridine(34) in tRNA + AH2 + ATP = 2-thiouridine(34) in tRNA + L-cysteinyl-[protein] + A + AMP + diphosphate + H(+). Functionally, catalyzes the 2-thiolation of uridine at the wobble position (U34) of tRNA(Lys), tRNA(Glu) and tRNA(Gln), leading to the formation of s(2)U34, the first step of tRNA-mnm(5)s(2)U34 synthesis. Sulfur is provided by IscS, via a sulfur-relay system. Binds ATP and its substrate tRNAs. This is tRNA-specific 2-thiouridylase MnmA from Citrobacter koseri (strain ATCC BAA-895 / CDC 4225-83 / SGSC4696).